The chain runs to 890 residues: DNA mismatch repair protein MutS (890 aa).

An ATP-binding site is contributed by 634 to 641; the sequence is GPNMGGKS.

Belongs to the DNA mismatch repair MutS family.

This protein is involved in the repair of mismatches in DNA. It is possible that it carries out the mismatch recognition step. This protein has a weak ATPase activity. The chain is DNA mismatch repair protein MutS from Burkholderia pseudomallei (strain K96243).